The sequence spans 237 residues: MAMPSLSACSSIEDDFNYGSSVASASVHIRMAFLRKVYGILCLQFLLTTATTAVFLYFDCMRTFIQGSPVLILASMFGSIGLIFALTLHRHKHPLNLYLLCGFTLSESLTLASVVTFYDVHVVMQAFMLTTAAFLALTTYTLQSKRDFSKLGAGLFAALWILILSGLLGIFVQNETVKLVLSAFGALVFCGFIIYDTHSLIHKLSPEEYVLASINLYLDIINLFLHLLQLLEVSNKK.

Over methionine 1–valine 37 the chain is Cytoplasmic. The chain crosses the membrane as a helical span at residues tyrosine 38–phenylalanine 58. Topologically, residues aspartate 59 to glycine 67 are lumenal. Residues serine 68–leucine 88 traverse the membrane as a helical segment. Residues histidine 89 to proline 94 are Cytoplasmic-facing. The chain crosses the membrane as a helical span at residues leucine 95–valine 115. A topological domain (lumenal) is located at residue threonine 116. Residues phenylalanine 117–leucine 137 form a helical membrane-spanning segment. Residues threonine 138 to leucine 151 lie on the Cytoplasmic side of the membrane. Residues glycine 152–valine 172 traverse the membrane as a helical segment. Over glutamine 173–asparagine 174 the chain is Lumenal. Residues glutamate 175–tyrosine 195 form a helical membrane-spanning segment. Residues aspartate 196–tyrosine 209 lie on the Cytoplasmic side of the membrane. The helical intramembrane region spans valine 210–leucine 230. Residues leucine 231 to lysine 237 lie on the Cytoplasmic side of the membrane.

This sequence belongs to the BI1 family. LFG subfamily.

It localises to the host Golgi apparatus membrane. Its function is as follows. May affect virulence through inhibition of apoptosis. The protein is Golgi anti-apoptotic protein (L6) of Vaccinia virus (strain LC16m0) (VACV).